Reading from the N-terminus, the 126-residue chain is Holo-[acyl-carrier-protein] synthase (126 aa).

Mg(2+) contacts are provided by D9 and E58.

Belongs to the P-Pant transferase superfamily. AcpS family. Mg(2+) serves as cofactor.

The protein resides in the cytoplasm. It catalyses the reaction apo-[ACP] + CoA = holo-[ACP] + adenosine 3',5'-bisphosphate + H(+). Functionally, transfers the 4'-phosphopantetheine moiety from coenzyme A to a Ser of acyl-carrier-protein. The protein is Holo-[acyl-carrier-protein] synthase of Escherichia coli (strain K12 / MC4100 / BW2952).